The sequence spans 472 residues: Probable dipeptidase A (472 aa).

Cys-10 is an active-site residue.

The protein belongs to the peptidase C69 family.

The catalysed reaction is an L-aminoacyl-L-amino acid + H2O = 2 an L-alpha-amino acid. The chain is Probable dipeptidase A (pepDA) from Streptococcus pyogenes serotype M1.